Reading from the N-terminus, the 227-residue chain is MAPCHIRKYQESDRQWVVGLLSRGMAEHAPATFRQLLKLPRTLILLLGGPLALLLVSGSWLLALVFSISLFPALWFLAKKPWTEYVDMTLCTDMSDITKSYLSERGSCFWVAESEEKVVGMVGALPVDDPTLREKRLQLFHLFVDSEHRRQGIAKALVRTVLQFARDQGYSEVILDTGTIQLSAMALYQSMGFKKTGQSFFCVWARLVALHTVHFIYHLPSSKVGSL.

The Cytoplasmic segment spans residues 1–42 (MAPCHIRKYQESDRQWVVGLLSRGMAEHAPATFRQLLKLPRT). Residues 43 to 63 (LILLLGGPLALLLVSGSWLLA) form a helical; Signal-anchor for type II membrane protein membrane-spanning segment. Positions 61–220 (LLALVFSISL…HTVHFIYHLP (160 aa)) constitute an N-acetyltransferase domain. The Lumenal segment spans residues 64–227 (LVFSISLFPA…HLPSSKVGSL (164 aa)).

The protein belongs to the NAT8 family. Preferentially expressed in liver and kidney. Also detected in brain (at protein level).

It is found in the endoplasmic reticulum-Golgi intermediate compartment membrane. Its subcellular location is the endoplasmic reticulum membrane. The enzyme catalyses L-lysyl-[protein] + acetyl-CoA = N(6)-acetyl-L-lysyl-[protein] + CoA + H(+). The catalysed reaction is an S-substituted L-cysteine + acetyl-CoA = an N-acetyl-L-cysteine-S-conjugate + CoA + H(+). The protein operates within sulfur metabolism; glutathione metabolism. Its function is as follows. Endoplasmic reticulum (ER)-membrane-bound lysine N-acetyltransferase catalyzing the N6-acetylation of lysine residues in the lumen of the ER in various proteins, including PROM1 and BACE1, using acetyl-CoA as acetyl donor. Thereby, may regulate apoptosis through the acetylation and the regulation of the expression of PROM1. May also regulate amyloid beta-peptide secretion through acetylation of BACE1 and the regulation of its expression in neurons. N(6)-lysine acetylation in the ER maintains protein homeostasis and regulates reticulophagy. Alternatively, acetylates the free alpha-amino group of cysteine S-conjugates to form mercapturic acids. This is the final step in a major route for detoxification of a wide variety of reactive electrophiles which starts with their incorporation into glutathione S-conjugates. The glutathione S-conjugates are then further processed into cysteine S-conjugates and finally mercapturic acids which are water soluble and can be readily excreted in urine or bile. The polypeptide is N-acetyltransferase 8 (Homo sapiens (Human)).